The primary structure comprises 260 residues: Proline-rich protein 33 (260 aa).

Positions 29–132 (GVQTVSPRPE…KVAPKPSRSG (104 aa)) are disordered. Over residues 73-83 (GPSPYSPPPAA) the composition is skewed to pro residues.

In Mus musculus (Mouse), this protein is Proline-rich protein 33 (Prr33).